A 254-amino-acid polypeptide reads, in one-letter code: Insulin-like growth factor-binding protein 4 (254 aa).

A signal peptide spans 1–21; sequence MLPFGLVAALLLAAGPRPSLG. The region spanning 23–103 is the IGFBP N-terminal domain; the sequence is EAIHCPPCSE…MHGQGVCTEL (81 aa). 6 cysteine pairs are disulfide-bonded: C27–C53, C30–C55, C38–C56, C44–C59, C67–C80, and C74–C100. The N-linked (GlcNAc...) asparagine glycan is linked to N125. 4 disulfides stabilise this stretch: C131/C138, C170/C200, C211/C222, and C224/C245. The region spanning 167–245 is the Thyroglobulin type-1 domain; that stretch reads QGSCQSELHR…GLEPKGELDC (79 aa). S251 is subject to Phosphoserine.

In terms of assembly, binds IGF2 more than IGF1.

The protein localises to the secreted. IGF-binding proteins prolong the half-life of the IGFs and have been shown to either inhibit or stimulate the growth promoting effects of the IGFs on cell culture. They alter the interaction of IGFs with their cell surface receptors. The sequence is that of Insulin-like growth factor-binding protein 4 (Igfbp4) from Mus musculus (Mouse).